A 266-amino-acid polypeptide reads, in one-letter code: Small ribosomal subunit protein uS2 (266 aa).

The segment at 229-254 (RTSDKEADTTTEEVAQEEVTDTKADE) is disordered. A compositionally biased stretch (acidic residues) spans 237-247 (TTTEEVAQEEV).

Belongs to the universal ribosomal protein uS2 family.

The sequence is that of Small ribosomal subunit protein uS2 from Flavobacterium psychrophilum (strain ATCC 49511 / DSM 21280 / CIP 103535 / JIP02/86).